Reading from the N-terminus, the 204-residue chain is Superoxide dismutase [Mn] (204 aa).

Mn(2+)-binding residues include His-29, His-84, Asp-167, and His-171.

It belongs to the iron/manganese superoxide dismutase family. In terms of assembly, homotetramer. The cofactor is Mn(2+).

The catalysed reaction is 2 superoxide + 2 H(+) = H2O2 + O2. Its function is as follows. Destroys superoxide anion radicals which are normally produced within the cells and which are toxic to biological systems. In Thermus aquaticus, this protein is Superoxide dismutase [Mn] (sodA).